The sequence spans 855 residues: Zinc finger protein 814 (855 aa).

In terms of domain architecture, KRAB spans 15–91 (VTFEDVAVNF…PMAGVSPKKA (77 aa)). Residues 120–142 (HRCEAWGNKLYDSGNFHQHQNEH) form a C2H2-type 1; degenerate zinc finger. C2H2-type zinc fingers lie at residues 242 to 264 (YVCCECGKSFSKYASLSNHQRVH), 269 to 291 (HECGECGKSFSKYVSFSNHQRVH), 296 to 318 (HECGECGKSFSKYVSFSNHQRVH), 324 to 346 (YECGECGKSFSKYASFSNHQRVH), 352 to 374 (YECGECGKSFSKYVSFSNHQRVH), 380 to 402 (YECGECGKSFSKYASFSNHQRVH), 408 to 430 (YECGECGKSFSQKSSLIQHQRFH), 436 to 458 (YGCEECGKSFSSEGHLRSHQRVH), 464 to 486 (FKCGECVKSFSHKRSLVHHQRVH), 492 to 514 (YQCGECGKSFSQKGNLVLHQRVH), 520 to 542 (YECGECGKSFSSKGHLRNHQQIH), 548 to 570 (YECGECGKSFSHKGTLILHQRVH), 576 to 598 (YGCGECGKSFSSIGHLRSHQRVH), 604 to 626 (YECGECGKSFSHKRSLVHHQRMH), 632 to 654 (YKCGDCGKSFNEKGHLRNHQRVH), 660 to 682 (FKCGECGKCFSHKGNLILHQHGH), 688 to 710 (YVCRECGKLFKKKSHLLVHQRIH), 716 to 738 (YACEACQKFFRNKYQLIAHQRVH), 744 to 766 (YECNDCGKSFTHSSTFCVHKRIH), 772 to 794 (YECSECGKSFAESSSFTKHKRVH), 800 to 822 (YECSECGKSFAESSSLTKHKRVH), and 828 to 850 (YKCEKCGKLFNKKSHLLVHQSSH). Lys-335 participates in a covalent cross-link: Glycyl lysine isopeptide (Lys-Gly) (interchain with G-Cter in SUMO2). Lys-391 participates in a covalent cross-link: Glycyl lysine isopeptide (Lys-Gly) (interchain with G-Cter in SUMO2).

The sequence is that of Zinc finger protein 814 (ZNF814) from Homo sapiens (Human).